A 224-amino-acid polypeptide reads, in one-letter code: Peroxiredoxin-6 (224 aa).

A Thioredoxin domain is found at 5-169 (LLLGDEAPNF…ILRVIISLQL (165 aa)). Residues 31–40 (DSWGILFSHP) are required and sufficient for targeting to lysosomes and lamellar bodies. Position 44 is a phosphothreonine (Thr44). The active-site Cysteine sulfenic acid (-SOH) intermediate; for peroxidase activity is Cys47. Lys63 is modified (N6-acetyllysine). Tyr89 carries the post-translational modification Phosphotyrosine. Asp140 acts as the For phospholipase activity in catalysis. A Phosphothreonine; by MAPK modification is found at Thr177. Lys209 is subject to N6-acetyllysine; alternate. Lys209 carries the post-translational modification N6-succinyllysine; alternate.

This sequence belongs to the peroxiredoxin family. Prx6 subfamily. As to quaternary structure, homodimer. Interacts with GSTP1; mediates PRDX6 glutathionylation and regeneration. Interacts with APEX1. Interacts with STH. May interact with FAM168B. May interact with HTR2A. The cofactor is Does not need Ca(2+) as cofactor.. Irreversibly inactivated by overoxidation of Cys-47 to sulfinic acid (Cys-SO(2)H) and sulfonic acid (Cys-SO(3)H) forms upon oxidative stress. Post-translationally, phosphorylation at Thr-177 by MAP kinases increases the phospholipase activity of the enzyme. The phosphorylated form exhibits a greater lysophosphatidylcholine acyltransferase activity compared to the non-phosphorylated form.

It is found in the cytoplasm. It localises to the lysosome. It catalyses the reaction a hydroperoxide + 2 glutathione = an alcohol + glutathione disulfide + H2O. The enzyme catalyses a 1,2-diacyl-sn-glycero-3-phosphocholine + H2O = a 1-acyl-sn-glycero-3-phosphocholine + a fatty acid + H(+). The catalysed reaction is a 1-acyl-sn-glycero-3-phosphocholine + an acyl-CoA = a 1,2-diacyl-sn-glycero-3-phosphocholine + CoA. It carries out the reaction 1-hexadecanoyl-sn-glycero-3-phosphocholine + hexadecanoyl-CoA = 1,2-dihexadecanoyl-sn-glycero-3-phosphocholine + CoA. It catalyses the reaction 1,2-dihexadecanoyl-sn-glycero-3-phosphocholine + H2O = 1-hexadecanoyl-sn-glycero-3-phosphocholine + hexadecanoate + H(+). Its function is as follows. Thiol-specific peroxidase that catalyzes the reduction of hydrogen peroxide and organic hydroperoxides to water and alcohols, respectively. Can reduce H(2)O(2) and short chain organic, fatty acid, and phospholipid hydroperoxides. Also has phospholipase activity, and can therefore either reduce the oxidized sn-2 fatty acyl group of phospholipids (peroxidase activity) or hydrolyze the sn-2 ester bond of phospholipids (phospholipase activity). These activities are dependent on binding to phospholipids at acidic pH and to oxidized phospholipds at cytosolic pH. Plays a role in cell protection against oxidative stress by detoxifying peroxides and in phospholipid homeostasis. Exhibits acyl-CoA-dependent lysophospholipid acyltransferase which mediates the conversion of lysophosphatidylcholine (1-acyl-sn-glycero-3-phosphocholine or LPC) into phosphatidylcholine (1,2-diacyl-sn-glycero-3-phosphocholine or PC). Shows a clear preference for LPC as the lysophospholipid and for palmitoyl CoA as the fatty acyl substrate. The protein is Peroxiredoxin-6 (PRDX6) of Bos taurus (Bovine).